Reading from the N-terminus, the 110-residue chain is MAITEVFTHKQPLGNSDPAHTAYGPGELTASTPAMTPLMLDATSGKLTVWDGAHAGAATGILAVTADQNSAELAFYKSGSFRIEDVLWPSAVTDENIKRNAFAGTAISIV.

The interval 1–27 is disordered; it reads MAITEVFTHKQPLGNSDPAHTAYGPGE.

It is found in the virion. Its function is as follows. Putative decoration protein. This chain is Putative decoration protein, found in Escherichia coli (Bacteriophage N15).